Consider the following 344-residue polypeptide: Ferrochelatase (344 aa).

H190 and E270 together coordinate Fe cation.

It belongs to the ferrochelatase family.

The protein resides in the cytoplasm. The catalysed reaction is heme b + 2 H(+) = protoporphyrin IX + Fe(2+). It functions in the pathway porphyrin-containing compound metabolism; protoheme biosynthesis; protoheme from protoporphyrin-IX: step 1/1. In terms of biological role, catalyzes the ferrous insertion into protoporphyrin IX. This is Ferrochelatase from Rickettsia felis (strain ATCC VR-1525 / URRWXCal2) (Rickettsia azadi).